Consider the following 821-residue polypeptide: V-type proton ATPase subunit a3 (821 aa).

The residue at position 2 (A2) is an N-acetylalanine. The Cytoplasmic segment spans residues 2-421 (AESGGGGGCC…ANPGVFTIVT (420 aa)). Residues 97–144 (KENDIDLDDVEVKLGELEAELVEINANNDKLQRSYNELMEYKLVLQKA) are a coiled coil. A Phosphoserine modification is found at S174. The chain crosses the membrane as a helical span at residues 422–442 (FPFLFAVMFGDWGHGICILLA). Residues 443-469 (TMYLILKEKKLASQKLGDIMEMAFGGR) are Vacuolar-facing. Residues 470–490 (YVILMMSLFSIYTGLIYNEFF) form a helical membrane-spanning segment. Residues 491–548 (SIPFPLFAPSAYDCRDVSCSEATTIGLIKVRDTYPFGLDPVWHGSRSELPFLNSLKMK) lie on the Cytoplasmic side of the membrane. A helical membrane pass occupies residues 549–569 (MSILLGVSQMNLGIIMSYFNA). Residues 570 to 581 (RFFKSSVNIWFQ) lie on the Vacuolar side of the membrane. The helical transmembrane segment at 582–602 (FIPQMIFLNSLFGYLSVLIII) threads the bilayer. The Cytoplasmic segment spans residues 603-640 (KWCTGSQADLYHVMIYMFLSPMDELGENQLFPHQKTLQ). A helical transmembrane segment spans residues 641–661 (LVLLFLALVSVPCMLLPKPFI). At 662–758 (LKKQHEARHQ…LLLAWGYNNP (97 aa)) the chain is on the vacuolar side. Residues 759–779 (LILIVGVLVFIFATVGVLLVM) traverse the membrane as a helical segment. The Cytoplasmic segment spans residues 780-821 (ETLSAFLHALRLHWVEFQNKFYEGDGYKFAPFTFIFTANEDE).

It belongs to the V-ATPase 116 kDa subunit family. In terms of assembly, V-ATPase is a heteromultimeric enzyme composed of a peripheral catalytic V1 complex (components A to H) attached to an integral membrane V0 proton pore complex (components: a, c, c'', d and e). In terms of tissue distribution, expressed in etiolated seedlings hypocotyls.

It is found in the vacuole membrane. Essential component of the vacuolar proton pump (V-ATPase), a multimeric enzyme that catalyzes the translocation of protons across the membranes. Required for assembly and activity of the V-ATPase. Involved in vacuolar nutrient storage (e.g. accumulation and storage of nitrate) and in tolerance to some toxic ions (e.g. zinc ions sequestration in vacuoles). The polypeptide is V-type proton ATPase subunit a3 (VHA-a3) (Arabidopsis thaliana (Mouse-ear cress)).